The chain runs to 269 residues: Formamidopyrimidine-DNA glycosylase (269 aa).

The active-site Schiff-base intermediate with DNA is Pro2. Glu3 acts as the Proton donor in catalysis. The active-site Proton donor; for beta-elimination activity is the Lys57. Residues His90, Arg109, and Arg150 each coordinate DNA. The FPG-type zinc-finger motif lies at 235-269 (NVYGRKGEPCEACGKAIESKVIGQRNTFFCTRCQR). Arg259 acts as the Proton donor; for delta-elimination activity in catalysis.

Belongs to the FPG family. As to quaternary structure, monomer. Zn(2+) is required as a cofactor.

It catalyses the reaction Hydrolysis of DNA containing ring-opened 7-methylguanine residues, releasing 2,6-diamino-4-hydroxy-5-(N-methyl)formamidopyrimidine.. It carries out the reaction 2'-deoxyribonucleotide-(2'-deoxyribose 5'-phosphate)-2'-deoxyribonucleotide-DNA = a 3'-end 2'-deoxyribonucleotide-(2,3-dehydro-2,3-deoxyribose 5'-phosphate)-DNA + a 5'-end 5'-phospho-2'-deoxyribonucleoside-DNA + H(+). In terms of biological role, involved in base excision repair of DNA damaged by oxidation or by mutagenic agents. Acts as a DNA glycosylase that recognizes and removes damaged bases. Has a preference for oxidized purines, such as 7,8-dihydro-8-oxoguanine (8-oxoG). Has AP (apurinic/apyrimidinic) lyase activity and introduces nicks in the DNA strand. Cleaves the DNA backbone by beta-delta elimination to generate a single-strand break at the site of the removed base with both 3'- and 5'-phosphates. The polypeptide is Formamidopyrimidine-DNA glycosylase (Alteromonas mediterranea (strain DSM 17117 / CIP 110805 / LMG 28347 / Deep ecotype)).